Here is a 309-residue protein sequence, read N- to C-terminus: Glutaminase (309 aa).

The substrate site is built by Ser-64, Asn-114, Glu-160, Asn-167, Tyr-191, Tyr-243, and Val-261.

The protein belongs to the glutaminase family. In terms of assembly, homotetramer.

It catalyses the reaction L-glutamine + H2O = L-glutamate + NH4(+). This Azorhizobium caulinodans (strain ATCC 43989 / DSM 5975 / JCM 20966 / LMG 6465 / NBRC 14845 / NCIMB 13405 / ORS 571) protein is Glutaminase.